A 198-amino-acid chain; its full sequence is Dual specificity protein phosphatase 1 (198 aa).

The tract at residues 1-20 (MSSRDRGSPSSSSSSSSLPG) is disordered. The segment covering 8-17 (SPSSSSSSSS) has biased composition (low complexity). Positions 26-47 (EKVKNQIQALVRVIKVARTYRD) are caM binding domain 1. In terms of domain architecture, Tyrosine-protein phosphatase spans 50 to 191 (VPSLIEQGLY…LQDLEKSMQV (142 aa)). Cysteine 135 (phosphocysteine intermediate) is an active-site residue. The tract at residues 151-180 (MKKHGMTLAQALQHVKSKRPVASPNAGFIR) is caM binding domain 2.

The protein belongs to the protein-tyrosine phosphatase family. Non-receptor class dual specificity subfamily. In terms of assembly, interacts with calmodulin (CaM) in a calcium Ca(2+)-dependent manner. In terms of tissue distribution, expressed in roots, stems, leaves and flowers.

It localises to the nucleus. Its subcellular location is the cytoplasm. It carries out the reaction O-phospho-L-tyrosyl-[protein] + H2O = L-tyrosyl-[protein] + phosphate. It catalyses the reaction O-phospho-L-seryl-[protein] + H2O = L-seryl-[protein] + phosphate. The enzyme catalyses O-phospho-L-threonyl-[protein] + H2O = L-threonyl-[protein] + phosphate. With respect to regulation, inhibited by sodium vanadate and sodium tungstate. NaF and spermifine repress specifically phosphoserine and phosphothreonine phosphatase activity. Has a dual specificity toward Ser/Thr and Tyr-containing proteins. Dephosphorylates MPK4 in vitro. The sequence is that of Dual specificity protein phosphatase 1 (DSPTP1) from Arabidopsis thaliana (Mouse-ear cress).